A 351-amino-acid polypeptide reads, in one-letter code: Anthranilate phosphoribosyltransferase (351 aa).

5-phospho-alpha-D-ribose 1-diphosphate-binding positions include Gly80, 83–84, Thr88, 90–93, 108–116, and Ser120; these read GD, NIST, and KHGNRSITS. Position 80 (Gly80) interacts with anthranilate. Ser92 is a binding site for Mg(2+). An anthranilate-binding site is contributed by Asn111. Residue Arg166 coordinates anthranilate. Mg(2+) contacts are provided by Asp229 and Glu230.

Belongs to the anthranilate phosphoribosyltransferase family. Homodimer. Mg(2+) serves as cofactor.

The enzyme catalyses N-(5-phospho-beta-D-ribosyl)anthranilate + diphosphate = 5-phospho-alpha-D-ribose 1-diphosphate + anthranilate. It participates in amino-acid biosynthesis; L-tryptophan biosynthesis; L-tryptophan from chorismate: step 2/5. Its function is as follows. Catalyzes the transfer of the phosphoribosyl group of 5-phosphorylribose-1-pyrophosphate (PRPP) to anthranilate to yield N-(5'-phosphoribosyl)-anthranilate (PRA). This chain is Anthranilate phosphoribosyltransferase, found in Chlorobaculum parvum (strain DSM 263 / NCIMB 8327) (Chlorobium vibrioforme subsp. thiosulfatophilum).